Reading from the N-terminus, the 627-residue chain is MIYDYGYDVIVVGGGHAGVEAASASARIGAKTLLLTHNIDTIGQMSCNPAIGGIGKGHLVKEIDAMGGVMAKAIDMAGIQFRILNSRKGPAVRATRAQADRVLYKKAINSLINNQENLDIFQDSVDDLVVENNTVCGAITKTGITFRAKKVVLTVGTFLGGKIHIGKVSNAGGRAGDQPSNALAARLRSLPFRVDRLKTGTPPRIDRRSVDFSVMEVQHGDNPTPYFSFFSKGKIEHPRQIPCYITYTNNETHKIITDNLDKSAMYSGLIEGIGPRYCPSIEDKVVRFADKERHQIFVEPEGLNSIELYPNGLSTSLPFEVQCNYIRSIKGFEKAFIMRPGYAIEYDFFDPRDLKPTLETKHIKNLYFAGQINGTTGYEEAGAQGLVASINAAISIDSDKSWYPTRADSYIGVLIDDLITKGTKEPYRMFTSRAEYRLILREDNADLRLSDKACELGLLSKEDQQHFISKKNAIIENIAMMKNTWIGPQTQKARDLEKFLDKKMTRESTLFDLLKRPEIDYSKLQQISELNLNLQDDAVIEQIEISAKYSGYIERQNKDIEKTATLEQKAIPTDFNYSQVKGLSNEVLQKLTEQKPTTLGEASRIPGITPAAISLLTIYMKKTGFIK.

FAD contacts are provided by residues 13 to 18 (GGGHAG), V125, and S180. 274-288 (GPRYCPSIEDKVVRF) lines the NAD(+) pocket. Q371 lines the FAD pocket.

Belongs to the MnmG family. In terms of assembly, homodimer. Heterotetramer of two MnmE and two MnmG subunits. It depends on FAD as a cofactor.

The protein localises to the cytoplasm. Its function is as follows. NAD-binding protein involved in the addition of a carboxymethylaminomethyl (cmnm) group at the wobble position (U34) of certain tRNAs, forming tRNA-cmnm(5)s(2)U34. The protein is tRNA uridine 5-carboxymethylaminomethyl modification enzyme MnmG of Francisella tularensis subsp. holarctica (strain FTNF002-00 / FTA).